The primary structure comprises 116 residues: Ribosome-binding factor A (116 aa).

It belongs to the RbfA family. In terms of assembly, monomer. Binds 30S ribosomal subunits, but not 50S ribosomal subunits or 70S ribosomes.

Its subcellular location is the cytoplasm. In terms of biological role, one of several proteins that assist in the late maturation steps of the functional core of the 30S ribosomal subunit. Associates with free 30S ribosomal subunits (but not with 30S subunits that are part of 70S ribosomes or polysomes). Required for efficient processing of 16S rRNA. May interact with the 5'-terminal helix region of 16S rRNA. This is Ribosome-binding factor A from Ureaplasma parvum serovar 3 (strain ATCC 27815 / 27 / NCTC 11736).